The chain runs to 428 residues: Serine--tRNA ligase (428 aa).

231–233 is an L-serine binding site; that stretch reads TAE. Position 262-264 (262-264) interacts with ATP; it reads RSE. Glu285 is an L-serine binding site. Position 349-352 (349-352) interacts with ATP; that stretch reads EISS. Ser385 lines the L-serine pocket.

This sequence belongs to the class-II aminoacyl-tRNA synthetase family. Type-1 seryl-tRNA synthetase subfamily. In terms of assembly, homodimer. The tRNA molecule binds across the dimer.

It is found in the cytoplasm. It catalyses the reaction tRNA(Ser) + L-serine + ATP = L-seryl-tRNA(Ser) + AMP + diphosphate + H(+). It carries out the reaction tRNA(Sec) + L-serine + ATP = L-seryl-tRNA(Sec) + AMP + diphosphate + H(+). Its pathway is aminoacyl-tRNA biosynthesis; selenocysteinyl-tRNA(Sec) biosynthesis; L-seryl-tRNA(Sec) from L-serine and tRNA(Sec): step 1/1. Its function is as follows. Catalyzes the attachment of serine to tRNA(Ser). Is also able to aminoacylate tRNA(Sec) with serine, to form the misacylated tRNA L-seryl-tRNA(Sec), which will be further converted into selenocysteinyl-tRNA(Sec). This chain is Serine--tRNA ligase, found in Cellvibrio japonicus (strain Ueda107) (Pseudomonas fluorescens subsp. cellulosa).